Here is a 399-residue protein sequence, read N- to C-terminus: Elongation factor Tu (399 aa).

The tr-type G domain maps to 10-209; sequence KPHVNIGTIG…AVDDYIPTPV (200 aa). The interval 19 to 26 is G1; that stretch reads GHVDHGKT. Residue 19-26 participates in GTP binding; sequence GHVDHGKT. T26 contacts Mg(2+). A G2 region spans residues 62-66; that stretch reads GITIN. Residues 83–86 are G3; that stretch reads DCPG. Residues 83–87 and 138–141 each bind GTP; these read DCPGH and NKCD. The interval 138 to 141 is G4; the sequence is NKCD. Residues 175–177 are G5; that stretch reads SAY.

Belongs to the TRAFAC class translation factor GTPase superfamily. Classic translation factor GTPase family. EF-Tu/EF-1A subfamily. Monomer.

The protein localises to the cytoplasm. It catalyses the reaction GTP + H2O = GDP + phosphate + H(+). Functionally, GTP hydrolase that promotes the GTP-dependent binding of aminoacyl-tRNA to the A-site of ribosomes during protein biosynthesis. This Bifidobacterium longum subsp. infantis (strain ATCC 15697 / DSM 20088 / JCM 1222 / NCTC 11817 / S12) protein is Elongation factor Tu.